A 572-amino-acid chain; its full sequence is Proline--tRNA ligase (572 aa).

This sequence belongs to the class-II aminoacyl-tRNA synthetase family. ProS type 1 subfamily. In terms of assembly, homodimer.

The protein localises to the cytoplasm. It carries out the reaction tRNA(Pro) + L-proline + ATP = L-prolyl-tRNA(Pro) + AMP + diphosphate. Its function is as follows. Catalyzes the attachment of proline to tRNA(Pro) in a two-step reaction: proline is first activated by ATP to form Pro-AMP and then transferred to the acceptor end of tRNA(Pro). As ProRS can inadvertently accommodate and process non-cognate amino acids such as alanine and cysteine, to avoid such errors it has two additional distinct editing activities against alanine. One activity is designated as 'pretransfer' editing and involves the tRNA(Pro)-independent hydrolysis of activated Ala-AMP. The other activity is designated 'posttransfer' editing and involves deacylation of mischarged Ala-tRNA(Pro). The misacylated Cys-tRNA(Pro) is not edited by ProRS. This Klebsiella pneumoniae subsp. pneumoniae (strain ATCC 700721 / MGH 78578) protein is Proline--tRNA ligase.